We begin with the raw amino-acid sequence, 457 residues long: Solute carrier family 38 member 6 (457 aa).

M1 is subject to N-acetylmethionine. Residues S4 and S7 each carry the phosphoserine modification. Transmembrane regions (helical) follow at residues 48–68 (FGLS…LGLA), 70–90 (VMAN…ALLA), 112–132 (LGLF…IIIQ), 171–191 (LLII…KIGF), and 192–212 (LGYT…VVVI). A disulfide bridge connects residues C219 and C239. N234 is a glycosylation site (N-linked (GlcNAc...) asparagine). Residues 251 to 271 (VYAIPTMAFSFLCHTSVLPIY) form a helical membrane-spanning segment. N-linked (GlcNAc...) asparagine glycosylation is present at N284. The next 5 helical transmembrane spans lie at 289–309 (AIAL…LTFY), 328–348 (AAVM…VPLI), 372–392 (SLTT…VPDI), 395–415 (VFGV…PGLF), and 432–452 (ALSL…LIIL).

The protein belongs to the amino acid/polyamine transporter 2 family.

Its subcellular location is the cell membrane. It is found in the synapse. The catalysed reaction is L-glutamine(out) = L-glutamine(in). It catalyses the reaction L-glutamate(out) = L-glutamate(in). Amino acid transporter with an apparent selectivity for L-glutamine and L-glutamate. May facilitate glutamine uptake in excitatory neurons. The transport mechanism remains to be elucidated. This Rattus norvegicus (Rat) protein is Solute carrier family 38 member 6.